We begin with the raw amino-acid sequence, 519 residues long: Circadian clock oscillator protein KaiC (519 aa).

2 KaiC domains span residues 1–246 (MSEK…VNIF) and 260–519 (VRVS…GSDS). Residues Gly-48, Thr-49, Gly-50, Lys-51, Thr-52, Leu-53, Lys-223, Leu-224, Arg-225, Thr-227, His-229, Thr-239, Thr-289, Gly-290, Thr-291, Gly-292, Lys-293, Thr-294, and Leu-295 each coordinate ATP. Thr-52 provides a ligand contact to Mg(2+). Thr-294 is a Mg(2+) binding site. Glu-317 is a binding site for Mg(2+). Position 330 (Trp-330) interacts with ATP. At Ser-430 the chain carries Phosphoserine; by autocatalysis. Position 431 is a phosphothreonine; by autocatalysis (Thr-431). ATP contacts are provided by Arg-450, Lys-456, Met-457, Arg-458, Ser-460, His-462, and Lys-464.

Belongs to the KaiC family. As to quaternary structure, homohexamer; hexamerization is dependent on ATP-binding. The KaiABC complex composition changes during the circadian cycle to control KaiC phosphorylation. Complexes KaiC(6), KaiA(2-4):KaiC(6), KaiB(6):KaiC(6) and KaiC(6):KaiB(6):KaiA(12) are among the most important forms, many form cooperatively. KaiC interacts with SasA, activating its autokinase function and leading to RpaA activation. It depends on Mg(2+) as a cofactor. In terms of processing, phosphorylated on serine and threonine residues by autocatalysis. Has a 4 step phosphorylation cycle; the autokinase acts first on Thr-431, then Ser-430. When Ser-430 is modified KaiC switches to an autophosphatase mode, acting first on phospho-Thr-431 then phospho-Ser-430.

It catalyses the reaction L-seryl-[protein] + ATP = O-phospho-L-seryl-[protein] + ADP + H(+). It carries out the reaction L-threonyl-[protein] + ATP = O-phospho-L-threonyl-[protein] + ADP + H(+). The catalysed reaction is ATP + H2O = ADP + phosphate + H(+). With respect to regulation, the interaction with KaiA enhances its phosphorylation status, while the interaction with KaiB decreases it. Functionally, central component of the KaiABC oscillator complex, which constitutes the main circadian regulator in cyanobacteria. Complex composition changes during the circadian cycle to control KaiC phosphorylation. KaiA stimulates KaiC autophosphorylation, while KaiB sequesters KaiA, leading to KaiC autodephosphorylation. Clock output pathways impact the RpaA transcriptional regulator. KaiC enhances the autophosphorylation activity of SasA, which then transfers its phosphate group to RpaA to activate it. KaiB and KaiC together enhance the phospho-RpaA dephosphatase activity of CikA. Has a weak, temperature-independent ATPase activity; ATPase activity defines the circadian period. The phosphorylation state of KaiC modulates its ATPase activity and effects KaiB binding. In Nostoc sp. (strain PCC 7120 / SAG 25.82 / UTEX 2576), this protein is Circadian clock oscillator protein KaiC.